The sequence spans 150 residues: Small ribosomal subunit protein uS15 (150 aa).

Residues 1 to 10 (MPHRSRHKRG) show a composition bias toward basic residues. A disordered region spans residues 1–21 (MPHRSRHKRGSSGSVRPATKT).

This sequence belongs to the universal ribosomal protein uS15 family. In terms of assembly, part of the 30S ribosomal subunit.

The protein is Small ribosomal subunit protein uS15 of Caldivirga maquilingensis (strain ATCC 700844 / DSM 13496 / JCM 10307 / IC-167).